A 383-amino-acid polypeptide reads, in one-letter code: WD repeat-containing protein 55 (383 aa).

Residues 1–11 (MDRTCEERPAE) show a composition bias toward basic and acidic residues. Positions 1–33 (MDRTCEERPAEDGSDEEDPDSMEAPTRIRDTPE) are disordered. Acidic residues predominate over residues 12–21 (DGSDEEDPDS). Phosphoserine is present on S14. 7 WD repeats span residues 36–75 (VLEAPASGLAFHPARDLLAAGDVDGDVFVFSYSCQEGETK), 82–121 (HHLKACRAVAFSEDGQKLITVSKDKAIHVLDVEQGQLERR), 125–163 (AHGAPINSLLLVDENVLATGDDTGGICLWDQRKEGPLMD), 166–205 (QHEEYIADMALDPAKKLLLTASGDGCLGIFNIKRRRFELL), 208–247 (PQSGDLTSVTLMKWGKKVACGSSEGTIYLFNWNGFGATSD), 250–289 (ALRAESIDCMVPVTESLLCTGSTDGVIRAVNILPNRVVGS), and 293–332 (HTGEPVEELALSHCGRFLASSGHDQRLKFWDMAQLRAVVV). S354 bears the Phosphoserine mark. The disordered stretch occupies residues 363-383 (REEGEDSMAQEEKEETGDDSD). Residues 365–383 (EGEDSMAQEEKEETGDDSD) show a composition bias toward acidic residues. Phosphothreonine is present on T378. A Phosphoserine modification is found at S382.

This sequence belongs to the WD repeat WDR55 family.

The protein localises to the nucleus. The protein resides in the nucleolus. Its subcellular location is the cytoplasm. In terms of biological role, nucleolar protein that acts as a modulator of rRNA synthesis. Plays a central role during organogenesis. This Homo sapiens (Human) protein is WD repeat-containing protein 55 (WDR55).